A 257-amino-acid chain; its full sequence is Pimeloyl-[acyl-carrier protein] methyl ester esterase (257 aa).

Positions 15–241 (HLVLLHGWGL…KAAHAPFVSH (227 aa)) constitute an AB hydrolase-1 domain. Substrate contacts are provided by residues Trp22, 82-83 (SL), and 143-147 (FLALQ). The Nucleophile role is filled by Ser82. Catalysis depends on residues Asp207 and His235. His235 is a binding site for substrate.

This sequence belongs to the AB hydrolase superfamily. Carboxylesterase BioH family. Monomer.

The protein localises to the cytoplasm. The enzyme catalyses 6-carboxyhexanoyl-[ACP] methyl ester + H2O = 6-carboxyhexanoyl-[ACP] + methanol + H(+). It participates in cofactor biosynthesis; biotin biosynthesis. Functionally, the physiological role of BioH is to remove the methyl group introduced by BioC when the pimeloyl moiety is complete. It allows to synthesize pimeloyl-ACP via the fatty acid synthetic pathway through the hydrolysis of the ester bonds of pimeloyl-ACP esters. In Klebsiella pneumoniae (strain 342), this protein is Pimeloyl-[acyl-carrier protein] methyl ester esterase.